A 693-amino-acid chain; its full sequence is Polyribonucleotide nucleotidyltransferase (693 aa).

Residues aspartate 485 and aspartate 491 each contribute to the Mg(2+) site. The KH domain maps to 552–611; the sequence is PRIETMQINTSKIATVIGPGGKQIRQIIERSGAQVDINDNGLINISANTQESIDKAKELI. The S1 motif domain occupies 621–689; the sequence is GKIYNGRVTS…EKGQLKLSHK (69 aa).

This sequence belongs to the polyribonucleotide nucleotidyltransferase family. Mg(2+) serves as cofactor.

The protein resides in the cytoplasm. It carries out the reaction RNA(n+1) + phosphate = RNA(n) + a ribonucleoside 5'-diphosphate. Its function is as follows. Involved in mRNA degradation. Catalyzes the phosphorolysis of single-stranded polyribonucleotides processively in the 3'- to 5'-direction. In Chlamydia muridarum (strain MoPn / Nigg), this protein is Polyribonucleotide nucleotidyltransferase.